The primary structure comprises 384 residues: Ceramide synthase 6 (384 aa).

Topologically, residues 1-34 are lumenal; sequence MAGILAWFWNERFWLPHNVTWADLKNTEEATFPQ. A glycan (N-linked (GlcNAc...) asparagine) is linked at Asn-18. A helical transmembrane segment spans residues 35 to 55; it reads AEDLYLAFPLAFCIFMVRLIF. Residues 66–127 are homeobox-like; it reads ALNIQANGPQ…RQRRNQEKPS (62 aa). The 202-residue stretch at 130 to 331 folds into the TLC domain; that stretch reads TRFCESMWRF…IVKIACKTVS (202 aa). A run of 4 helical transmembrane segments spans residues 174–194, 205–225, 263–283, and 303–323; these read LTAD…SLMV, FGIM…SYVN, LFVM…PLWV, and VFNL…YLIV. The Cytoplasmic segment spans residues 324–384; it reads KIACKTVSKG…LLTGPCSVDD (61 aa). Residues 335–384 are disordered; it reads VSKDDRSDIESSSDDEDSEPPGKKPHSSTTTNGTSGTNGYLLTGPCSVDD. Positions 361–373 are enriched in low complexity; that stretch reads SSTTTNGTSGTNG.

Post-translationally, N-glycosylated. Glycosylation on Asn-18 is not necessary for function. In terms of processing, acetylated. Deacetylation by SIRT3 increases enzyme activity and promotes mitochondrial ceramide accumulation. Phosphorylated at the C-terminus by CK2. As to expression, broadly expressed, with highest levels in kidney and brain (at protein level).

Its subcellular location is the endoplasmic reticulum membrane. The catalysed reaction is a sphingoid base + hexadecanoyl-CoA = an N-hexadecanoyl-sphingoid base + CoA + H(+). The enzyme catalyses sphinganine + hexadecanoyl-CoA = N-hexadecanoylsphinganine + CoA + H(+). It carries out the reaction hexadecasphinganine + hexadecanoyl-CoA = N-hexadecanoylhexadecasphinganine + CoA + H(+). It catalyses the reaction sphing-4-enine + hexadecanoyl-CoA = N-hexadecanoylsphing-4-enine + CoA + H(+). The catalysed reaction is sphinganine + tetradecanoyl-CoA = N-(tetradecanoyl)-sphinganine + CoA + H(+). The enzyme catalyses sphinganine + octadecanoyl-CoA = N-(octadecanoyl)-sphinganine + CoA + H(+). The protein operates within lipid metabolism; sphingolipid metabolism. Functionally, ceramide synthase that catalyzes the transfer of the acyl chain from acyl-CoA to a sphingoid base, with high selectivity toward palmitoyl-CoA (hexadecanoyl-CoA; C16:0-CoA). Can use other acyl donors, but with less efficiency. N-acylates sphinganine and sphingosine bases to form dihydroceramides and ceramides in de novo synthesis and salvage pathways, respectively. Ceramides generated by CERS6 play a role in inflammatory response. Acts as a regulator of metabolism and hepatic lipid accumulation. Under high fat diet, palmitoyl- (C16:0-) ceramides generated by CERS6 specifically bind the mitochondrial fission factor MFF, thereby promoting mitochondrial fragmentation and contributing to the development of obesity. The sequence is that of Ceramide synthase 6 from Mus musculus (Mouse).